A 137-amino-acid chain; its full sequence is Histone H3-like 2 (137 aa).

Residues 1 to 36 (MARTKQTARKSTGGKGPRKELATKAARKTRRPYRGG) form a disordered region. 2 positions are modified to N6,N6,N6-trimethyllysine; alternate: K5 and K10. K5 and K10 each carry N6,N6-dimethyllysine; alternate. K5 and K10 each carry N6-methyllysine; alternate. The residue at position 10 (K10) is an N6-acetyllysine; alternate. S11 carries the phosphoserine modification. A Phosphothreonine modification is found at T12. The residue at position 15 (K15) is an N6-acetyllysine. 4 positions are modified to N6-methyllysine; alternate: K19, K24, K28, and K38. An N6-acetyllysine; alternate mark is found at K19 and K24. Over residues 25 to 36 (AARKTRRPYRGG) the composition is skewed to basic residues. N6,N6,N6-trimethyllysine; alternate occurs at positions 28 and 38. Residues K28 and K38 each carry the N6,N6-dimethyllysine; alternate modification.

It belongs to the histone H3 family. The nucleosome is a histone octamer containing two molecules each of H2A, H2B, H3 and H4 assembled in one H3-H4 heterotetramer and two H2A-H2B heterodimers. The octamer wraps approximately 147 bp of DNA. In terms of tissue distribution, pollen specific.

It is found in the nucleus. Its subcellular location is the chromosome. Its function is as follows. Core component of nucleosome. Nucleosomes wrap and compact DNA into chromatin, limiting DNA accessibility to the cellular machineries which require DNA as a template. Histones thereby play a central role in transcription regulation, DNA repair, DNA replication and chromosomal stability. DNA accessibility is regulated via a complex set of post-translational modifications of histones, also called histone code, and nucleosome remodeling. The polypeptide is Histone H3-like 2 (MGH3) (Arabidopsis thaliana (Mouse-ear cress)).